Here is a 155-residue protein sequence, read N- to C-terminus: Ribosomal RNA large subunit methyltransferase H (155 aa).

S-adenosyl-L-methionine-binding positions include Leu-72, Gly-103, and Leu-122–Leu-127.

The protein belongs to the RNA methyltransferase RlmH family. As to quaternary structure, homodimer.

It localises to the cytoplasm. The catalysed reaction is pseudouridine(1915) in 23S rRNA + S-adenosyl-L-methionine = N(3)-methylpseudouridine(1915) in 23S rRNA + S-adenosyl-L-homocysteine + H(+). Functionally, specifically methylates the pseudouridine at position 1915 (m3Psi1915) in 23S rRNA. This Mannheimia succiniciproducens (strain KCTC 0769BP / MBEL55E) protein is Ribosomal RNA large subunit methyltransferase H.